The primary structure comprises 194 residues: Ubiquitin-conjugating enzyme E2 T (194 aa).

The region spanning 2-152 (QRVSRLKREM…AKKWTAEHAI (151 aa)) is the UBC core domain. C86 functions as the Glycyl thioester intermediate in the catalytic mechanism. Basic and acidic residues-rich tracts occupy residues 158–170 (CVETDGKTPENKN) and 185–194 (NLEHTKKVCL). Residues 158 to 194 (CVETDGKTPENKNLKTSHKREALSAQENLEHTKKVCL) are disordered.

It belongs to the ubiquitin-conjugating enzyme family.

It localises to the nucleus. The catalysed reaction is S-ubiquitinyl-[E1 ubiquitin-activating enzyme]-L-cysteine + [E2 ubiquitin-conjugating enzyme]-L-cysteine = [E1 ubiquitin-activating enzyme]-L-cysteine + S-ubiquitinyl-[E2 ubiquitin-conjugating enzyme]-L-cysteine.. The protein operates within protein modification; protein ubiquitination. Its function is as follows. Accepts ubiquitin from the E1 complex and catalyzes its covalent attachment to other proteins. Catalyzes monoubiquitination. Involved in DNA repair. The polypeptide is Ubiquitin-conjugating enzyme E2 T (ube2t) (Danio rerio (Zebrafish)).